The primary structure comprises 196 residues: 3-isopropylmalate dehydratase small subunit (196 aa).

The protein belongs to the LeuD family. LeuD type 1 subfamily. As to quaternary structure, heterodimer of LeuC and LeuD.

The enzyme catalyses (2R,3S)-3-isopropylmalate = (2S)-2-isopropylmalate. The protein operates within amino-acid biosynthesis; L-leucine biosynthesis; L-leucine from 3-methyl-2-oxobutanoate: step 2/4. Functionally, catalyzes the isomerization between 2-isopropylmalate and 3-isopropylmalate, via the formation of 2-isopropylmaleate. The sequence is that of 3-isopropylmalate dehydratase small subunit from Corynebacterium diphtheriae (strain ATCC 700971 / NCTC 13129 / Biotype gravis).